The sequence spans 244 residues: CTD nuclear envelope phosphatase 1 (244 aa).

The chain crosses the membrane as a helical span at residues 7–29 (LLGLRTFVAFAAKLWSFFIYLLR). Residues 57–224 (AQVKRKILVL…LNLLPMLDAL (168 aa)) enclose the FCP1 homology domain.

Belongs to the dullard family. (Microbial infection) Interacts with Chandipura virus matrix protein. In terms of assembly, interacts with CNEP1R1; the complex dephosphorylates LPIN1 and LPIN2. Muscle specific with lower expression in other metabolic tissues.

It localises to the endoplasmic reticulum membrane. The protein localises to the nucleus membrane. The enzyme catalyses O-phospho-L-seryl-[protein] + H2O = L-seryl-[protein] + phosphate. The catalysed reaction is O-phospho-L-threonyl-[protein] + H2O = L-threonyl-[protein] + phosphate. Its function is as follows. Serine/threonine protein phosphatase forming with CNEP1R1 an active phosphatase complex that dephosphorylates and may activate LPIN1 and LPIN2. LPIN1 and LPIN2 are phosphatidate phosphatases that catalyze the conversion of phosphatidic acid to diacylglycerol and control the metabolism of fatty acids at different levels. May indirectly modulate the lipid composition of nuclear and/or endoplasmic reticulum membranes and be required for proper nuclear membrane morphology and/or dynamics. May also indirectly regulate the production of lipid droplets and triacylglycerol. May antagonize BMP signaling. In Homo sapiens (Human), this protein is CTD nuclear envelope phosphatase 1 (CTDNEP1).